We begin with the raw amino-acid sequence, 382 residues long: Lysophosphatidylserine lipase ABHD12 (382 aa).

The span at Met-1–Ser-12 shows a compositional bias: basic and acidic residues. Residues Met-1–Met-45 form a disordered region. The Cytoplasmic portion of the chain corresponds to Met-1 to Arg-60. Residues Ser-13–Leu-25 show a composition bias toward polar residues. The helical transmembrane segment at Ile-61–Ser-81 threads the bilayer. Over Ile-82–Gly-382 the chain is Extracellular. N-linked (GlcNAc...) asparagine glycosylation occurs at Asn-109. Catalysis depends on Ser-232, which acts as the Nucleophile. Residues Asp-319 and His-358 each act as charge relay system in the active site.

This sequence belongs to the serine esterase family. In terms of tissue distribution, ubiquitously expressed in adult tissues.

It localises to the endoplasmic reticulum membrane. It catalyses the reaction 1-(9Z-octadecenoyl)-sn-glycero-3-phospho-L-serine + H2O = sn-glycero-3-phospho-L-serine + (9Z)-octadecenoate + H(+). The enzyme catalyses 1-(9Z-octadecenoyl)-sn-glycero-3-phospho-(1'-sn-glycerol) + H2O = sn-glycero-3-phospho-(1'-sn-glycerol) + (9Z)-octadecenoate + H(+). The catalysed reaction is 1-(9Z-octadecenoyl)-sn-glycero-3-phospho-(1D-myo-inositol) + H2O = sn-glycero-3-phospho-1D-myo-inositol + (9Z)-octadecenoate + H(+). It carries out the reaction 1-(9Z-octadecenoyl)-sn-glycero-3-phosphoethanolamine + H2O = sn-glycero-3-phosphoethanolamine + (9Z)-octadecenoate + H(+). It catalyses the reaction 1-(9Z-octadecenoyl)-sn-glycero-3-phosphocholine + H2O = 1-(9Z-octadecenoyl)-sn-glycerol + phosphocholine + H(+). The enzyme catalyses 2-(9Z-octadecenoyl)-glycerol + H2O = glycerol + (9Z)-octadecenoate + H(+). The catalysed reaction is 1-hexadecanoyl-sn-glycero-3-phospho-L-serine + H2O = sn-glycero-3-phospho-L-serine + hexadecanoate + H(+). It carries out the reaction 2-(5Z,8Z,11Z,14Z-eicosatetraenoyl)-glycerol + H2O = glycerol + (5Z,8Z,11Z,14Z)-eicosatetraenoate + H(+). It catalyses the reaction Hydrolyzes glycerol monoesters of long-chain fatty acids.. The enzyme catalyses 1-decanoylglycerol + H2O = decanoate + glycerol + H(+). The catalysed reaction is 1-dodecanoylglycerol + H2O = dodecanoate + glycerol + H(+). It carries out the reaction 1-tetradecanoylglycerol + H2O = tetradecanoate + glycerol + H(+). It catalyses the reaction 2-hexadecanoylglycerol + H2O = glycerol + hexadecanoate + H(+). The enzyme catalyses 1-(9Z-octadecenoyl)-glycerol + H2O = glycerol + (9Z)-octadecenoate + H(+). The catalysed reaction is 2-(9Z,12Z-octadecadienoyl)-glycerol + H2O = (9Z,12Z)-octadecadienoate + glycerol + H(+). It carries out the reaction 1-(5Z,8Z,11Z,14Z-eicosatetraenoyl)-glycerol + H2O = glycerol + (5Z,8Z,11Z,14Z)-eicosatetraenoate + H(+). It catalyses the reaction 1-(9Z,12Z-octadecadienoyl)-glycerol + H2O = (9Z,12Z)-octadecadienoate + glycerol + H(+). The enzyme catalyses 1-hexadecanoylglycerol + H2O = glycerol + hexadecanoate + H(+). The catalysed reaction is 1-octadecanoylglycerol + H2O = octadecanoate + glycerol + H(+). It carries out the reaction 1-octadecanoyl-2-(9,10-epoxyoctadecanoyl)-sn-glycero-3-phospho-L-serine + H2O = 9,10-epoxyoctadecanoate + 1-octadecanoyl-sn-glycero-3-phosphoserine + H(+). It catalyses the reaction 1-octadecanoyl-2-(10-hydroxyoctadecanoyl)-sn-glycero-3-phospho-L-serine + H2O = 1-octadecanoyl-sn-glycero-3-phosphoserine + 10-hydroxyoctadecanoate + H(+). The enzyme catalyses 1-hexadecanoyl-2-(10-hydroxyoctadecanoyl)-sn-glycero-3-phospho-L-serine + H2O = 10-hydroxyoctadecanoate + 1-hexadecanoyl-sn-glycero-3-phospho-L-serine + H(+). Functionally, lysophosphatidylserine (LPS) lipase that mediates the hydrolysis of lysophosphatidylserine, a class of signaling lipids that regulates immunological and neurological processes. Represents a major lysophosphatidylserine lipase in the brain, thereby playing a key role in the central nervous system. Also able to hydrolyze oxidized phosphatidylserine; oxidized phosphatidylserine is produced in response to severe inflammatory stress and constitutes a proapoptotic 'eat me' signal. Also has monoacylglycerol (MAG) lipase activity: hydrolyzes 2-arachidonoylglycerol (2-AG), thereby acting as a regulator of endocannabinoid signaling pathways. Has a strong preference for very-long-chain lipid substrates; substrate specificity is likely due to improved catalysis and not improved substrate binding. This Danio rerio (Zebrafish) protein is Lysophosphatidylserine lipase ABHD12.